Reading from the N-terminus, the 297-residue chain is Pyrroline-5-carboxylate reductase 1 (297 aa).

Belongs to the pyrroline-5-carboxylate reductase family.

The protein resides in the cytoplasm. It catalyses the reaction L-proline + NADP(+) = (S)-1-pyrroline-5-carboxylate + NADPH + 2 H(+). The enzyme catalyses L-proline + NAD(+) = (S)-1-pyrroline-5-carboxylate + NADH + 2 H(+). It participates in amino-acid biosynthesis; L-proline biosynthesis; L-proline from L-glutamate 5-semialdehyde: step 1/1. Its function is as follows. Catalyzes the reduction of 1-pyrroline-5-carboxylate (PCA) to L-proline. The protein is Pyrroline-5-carboxylate reductase 1 (proH) of Bacillus subtilis (strain 168).